Consider the following 154-residue polypeptide: Lipoprotein signal peptidase (154 aa).

Transmembrane regions (helical) follow at residues 55 to 75 (GHMW…IYIM) and 84 to 104 (LFSI…IDRV). Active-site residues include D111 and D129. The chain crosses the membrane as a helical span at residues 124-144 (IFNVADASLSVGVVLMLVYVF).

This sequence belongs to the peptidase A8 family.

The protein resides in the cell membrane. It carries out the reaction Release of signal peptides from bacterial membrane prolipoproteins. Hydrolyzes -Xaa-Yaa-Zaa-|-(S,diacylglyceryl)Cys-, in which Xaa is hydrophobic (preferably Leu), and Yaa (Ala or Ser) and Zaa (Gly or Ala) have small, neutral side chains.. The protein operates within protein modification; lipoprotein biosynthesis (signal peptide cleavage). Its function is as follows. This protein specifically catalyzes the removal of signal peptides from prolipoproteins. This is Lipoprotein signal peptidase from Listeria monocytogenes serovar 1/2a (strain ATCC BAA-679 / EGD-e).